A 603-amino-acid chain; its full sequence is Elongation factor 4 (603 aa).

Positions V7–P189 constitute a tr-type G domain. GTP is bound by residues D19–T24 and N136–D139.

Belongs to the TRAFAC class translation factor GTPase superfamily. Classic translation factor GTPase family. LepA subfamily.

It is found in the cell inner membrane. It catalyses the reaction GTP + H2O = GDP + phosphate + H(+). Its function is as follows. Required for accurate and efficient protein synthesis under certain stress conditions. May act as a fidelity factor of the translation reaction, by catalyzing a one-codon backward translocation of tRNAs on improperly translocated ribosomes. Back-translocation proceeds from a post-translocation (POST) complex to a pre-translocation (PRE) complex, thus giving elongation factor G a second chance to translocate the tRNAs correctly. Binds to ribosomes in a GTP-dependent manner. In Trichormus variabilis (strain ATCC 29413 / PCC 7937) (Anabaena variabilis), this protein is Elongation factor 4.